Here is a 467-residue protein sequence, read N- to C-terminus: Mitochondrial adenyl nucleotide antiporter SLC25A23 (467 aa).

Positions Met1–Asn148 are regulatory N-terminal domain. Residues Met1–Gln187 are Mitochondrial intermembrane-facing. 3 consecutive EF-hand domains span residues Glu9 to Gly44, Glu76 to Ser111, and Ile112 to Glu147. The Ca(2+) site is built by Asp22, Asn24, Asp26, Arg28, and Glu33. Positions Ala39 to Pro61 are disordered. Asp89, Asn91, Asp93, His95, and Glu100 together coordinate Ca(2+). The linker region stretch occupies residues Val149–His158. The C-terminal transmembrane transporter domain stretch occupies residues Ile164–Arg467. Solcar repeat units follow at residues Gly182–Ala268, Leu276–Arg361, and Pro373–Ala461. Residues Leu188–Leu205 form a helical membrane-spanning segment. Topologically, residues Asp206–Arg242 are mitochondrial matrix. The helical transmembrane segment at Gly243–Tyr262 threads the bilayer. Residues Glu263 to Gly285 are Mitochondrial intermembrane-facing. A helical transmembrane segment spans residues Ser286–Met299. Residues Glu300–Arg335 are Mitochondrial matrix-facing. A helical membrane pass occupies residues Gly336–Tyr355. Residues Glu356–Leu378 are Mitochondrial intermembrane-facing. A helical transmembrane segment spans residues Leu379–Leu396. The Mitochondrial matrix segment spans residues Ala397–Arg435. The helical transmembrane segment at Gly436 to Tyr455 threads the bilayer. The Mitochondrial intermembrane segment spans residues Glu456 to Arg467.

It belongs to the mitochondrial carrier (TC 2.A.29) family. In terms of assembly, interacts with MCU. Interacts with MICU1.

It is found in the mitochondrion inner membrane. It catalyses the reaction Mg(2+)(out) + phosphate(in) + ATP(out) = Mg(2+)(in) + phosphate(out) + ATP(in). It carries out the reaction ADP(out) + phosphate(in) + H(+)(out) = ADP(in) + phosphate(out) + H(+)(in). The enzyme catalyses AMP(out) + phosphate(in) = AMP(in) + phosphate(out). The catalysed reaction is phosphate(in) + ATP(out) + 2 H(+)(out) = phosphate(out) + ATP(in) + 2 H(+)(in). It catalyses the reaction dADP(in) + ADP(out) = dADP(out) + ADP(in). It carries out the reaction Mg(2+)(in) + ADP(out) + ATP(in) + H(+)(out) = Mg(2+)(out) + ADP(in) + ATP(out) + H(+)(in). The enzyme catalyses ADP(out) + diphosphate(in) = ADP(in) + diphosphate(out). The catalysed reaction is dAMP(in) + ADP(out) + H(+)(out) = dAMP(out) + ADP(in) + H(+)(in). It catalyses the reaction 3'-AMP(in) + ADP(out) + H(+)(out) = 3'-AMP(out) + ADP(in) + H(+)(in). It carries out the reaction dAMP(out) + phosphate(in) = dAMP(in) + phosphate(out). The enzyme catalyses 3'-AMP(out) + phosphate(in) = 3'-AMP(in) + phosphate(out). The catalysed reaction is dADP(out) + phosphate(in) + H(+)(out) = dADP(in) + phosphate(out) + H(+)(in). Its activity is regulated as follows. Activated by an increase in cytosolic calcium levels that induce a conformational change of the N-terminal regulatory domain, uncapping the channel and allowing transport. In terms of biological role, electroneutral antiporter that mediates the transport of adenine nucleotides through the inner mitochondrial membrane. Originally identified as an ATP-magnesium/inorganic phosphate antiporter, it also acts as a broad specificity adenyl nucleotide antiporter. By regulating the mitochondrial matrix adenine nucleotide pool could adapt to changing cellular energetic demands and indirectly regulate adenine nucleotide-dependent metabolic pathways. Also acts as a regulator of mitochondrial calcium uptake and can probably transport trace amounts of other divalent metal cations in complex with ATP. In vitro, a low activity is also observed with guanyl and pyrimidine nucleotides. This is Mitochondrial adenyl nucleotide antiporter SLC25A23 from Mus musculus (Mouse).